A 240-amino-acid polypeptide reads, in one-letter code: Ribosomal RNA small subunit methyltransferase G (240 aa).

S-adenosyl-L-methionine contacts are provided by residues G80, F85, 131–132 (AE), and R150.

It belongs to the methyltransferase superfamily. RNA methyltransferase RsmG family.

It localises to the cytoplasm. In terms of biological role, specifically methylates the N7 position of a guanine in 16S rRNA. The polypeptide is Ribosomal RNA small subunit methyltransferase G (Dictyoglomus thermophilum (strain ATCC 35947 / DSM 3960 / H-6-12)).